The primary structure comprises 61 residues: 14-3-3-like protein (61 aa).

The protein belongs to the 14-3-3 family.

The sequence is that of 14-3-3-like protein from Zea mays (Maize).